A 509-amino-acid polypeptide reads, in one-letter code: Coiled-coil domain-containing protein 181 (509 aa).

Disordered stretches follow at residues 1-122 (MDED…EDEE) and 237-369 (FLPP…EKKK). Composition is skewed to basic and acidic residues over residues 22-33 (DLEWLINDKEKS) and 41-56 (ACKK…KENE). The segment covering 60–69 (ELGQQLSDPD) has biased composition (polar residues). Basic and acidic residues-rich tracts occupy residues 70-82 (NSPK…RRND) and 266-275 (IKKEESEAKG). Positions 319-333 (RIQSAGVSPVTSTYC) are enriched in polar residues. Coiled coils occupy residues 335–377 (SPRQ…VFKA) and 418–488 (LKKK…RSKQ). Over residues 337 to 369 (RQKELQKQLERKREKLKREEEQRKLEEENEKKK) the composition is skewed to basic and acidic residues.

The protein belongs to the CCDC181 family. Homodimer. Interacts with HOOK1. Interacts with HOOK2. Interacts with HOOK3. In terms of tissue distribution, predominantly expressed in testis. Expressed at lower level in brain, eye, trachea and lung. Barely expressed in tongue, heart, liver, kidney, spleen and muscle. Present at high level in elongating spermatids, whereas lower levels are observed in round spermatids (at protein level).

Its subcellular location is the cytoplasm. It localises to the cytoskeleton. It is found in the cell projection. The protein resides in the cilium. The protein localises to the flagellum. In terms of biological role, microtubule-binding protein that localizes to the microtubular manchette of elongating spermatids. This chain is Coiled-coil domain-containing protein 181, found in Mus musculus (Mouse).